A 3072-amino-acid polypeptide reads, in one-letter code: Platelet binding protein GspB (3072 aa).

The N-terminal stretch at 1–85 (MFFKRQKGQY…AVLGGAVVTS (85 aa)) is a signal peptide. Disordered regions lie at residues 117–147 (EAAT…SASS), 182–254 (SESL…APNV), 876–909 (SAST…SVSA), 936–969 (SAST…SVSA), 1024–2085 (SASV…SVSA), 2106–2139 (SAST…SVSA), 2173–2223 (VSAS…SVSA), 2250–2595 (SAST…SVSA), 2625–2965 (TSAS…NASV), and 3014–3045 (SQSL…GESE). Positions 118–127 (AATTLSSTEA) are enriched in polar residues. The ser-rich region 1 (SSR1) stretch occupies residues 123-236 (SSTEANPVES…SSQQSTEASS (114 aa)). Composition is skewed to low complexity over residues 131–147 (ESLS…SASS) and 182–238 (SESL…SSQT). Positions 237–603 (QTGRRRTRRA…GSKFIDTRAG (367 aa)) are basic region (BR). The tract at residues 604 to 3028 (SISKSQSTSN…ESQSSSASQS (2425 aa)) is ser-rich region 2 (SSR2). The span at 3014–3028 (SQSLSESQSSSASQS) shows a compositional bias: low complexity. Positions 3038–3042 (LPRTG) match the LPXTG sorting signal motif. Position 3041 is a pentaglycyl murein peptidoglycan amidated threonine (Thr-3041). The propeptide at 3042–3072 (GESENKASILALGLGALGLAFKKRKKNESED) is removed by sortase.

It belongs to the serine-rich repeat protein (SRRP) family. As to quaternary structure, both SSR domains in the unglycosylated protein bind to Asp2 and Asp3; glycosylated protein binds less well. Interacts with the human cell surface glycoprotein GP1BA. In terms of processing, proteolytically cleaved by a metalloprotease. Both SSR1 and SSR2 domains are glycosylated. A truncated derivative (residues 1-2062) contains 105 nmol per nmol of protein, suggesting at least 10% of the apparent molecular weight is due to carbohydrates. Glucose and N-acetylglucosamine are present in a ratio of 30:73 residues per truncated polypeptide, as well as minor amounts of galactose and N-acetylgalactosamine. Glycosylation occurs intracellularly in the Ser-rich regions SSR1 and SSR2. Glycosylation of SSR2 domain may be required to prevent aggregation of GspB. It is probable that most of the Ser residues in SSR1 and SSR2 are O-GlcNAcylated. Sequential glycosylation by sugar transferases are able to generate complex sugar polymorphisms.

It is found in the secreted. The protein resides in the cell wall. Functionally, plays a role in virulence and host-pathogen interactions. Mediates binding to human platelets via interaction with the human cell surface glycoprotein GP1BA. Plays a positive role in biofilm formation, possibly by self-association via the basic region (BR). The polypeptide is Platelet binding protein GspB (gspB) (Streptococcus gordonii).